Consider the following 309-residue polypeptide: Golgi to ER traffic protein 4 homolog (309 aa).

A disordered region spans residues 290–309 (SGGGLASMEVDGPTIEDEMD).

Belongs to the GET4 family.

May play a role in insertion of tail-anchored proteins into the endoplasmic reticulum membrane. The protein is Golgi to ER traffic protein 4 homolog of Dictyostelium discoideum (Social amoeba).